The primary structure comprises 537 residues: Putative cysteine ligase BshC (537 aa).

The protein belongs to the BshC family.

Involved in bacillithiol (BSH) biosynthesis. May catalyze the last step of the pathway, the addition of cysteine to glucosamine malate (GlcN-Mal) to generate BSH. In Staphylococcus saprophyticus subsp. saprophyticus (strain ATCC 15305 / DSM 20229 / NCIMB 8711 / NCTC 7292 / S-41), this protein is Putative cysteine ligase BshC.